We begin with the raw amino-acid sequence, 264 residues long: Thiazole synthase (264 aa).

Lys106 acts as the Schiff-base intermediate with DXP in catalysis. 1-deoxy-D-xylulose 5-phosphate-binding positions include Gly167, 193 to 194, and 215 to 216; these read AG and NS.

It belongs to the ThiG family. Homotetramer. Forms heterodimers with either ThiH or ThiS.

Its subcellular location is the cytoplasm. The enzyme catalyses [ThiS sulfur-carrier protein]-C-terminal-Gly-aminoethanethioate + 2-iminoacetate + 1-deoxy-D-xylulose 5-phosphate = [ThiS sulfur-carrier protein]-C-terminal Gly-Gly + 2-[(2R,5Z)-2-carboxy-4-methylthiazol-5(2H)-ylidene]ethyl phosphate + 2 H2O + H(+). Its pathway is cofactor biosynthesis; thiamine diphosphate biosynthesis. Its function is as follows. Catalyzes the rearrangement of 1-deoxy-D-xylulose 5-phosphate (DXP) to produce the thiazole phosphate moiety of thiamine. Sulfur is provided by the thiocarboxylate moiety of the carrier protein ThiS. In vitro, sulfur can be provided by H(2)S. In Pseudomonas putida (strain W619), this protein is Thiazole synthase.